The following is a 585-amino-acid chain: Amyloid protein-binding protein 2 (585 aa).

TPR repeat units lie at residues 50 to 83, 120 to 153, 206 to 239, 288 to 321, 333 to 367, 429 to 462, 471 to 505, and 514 to 547; these read QGRLCQLGSEFCELEVFAKVLRALDKRHLLHHCF, IQVGFVLGGFLSDAGWYSDAEKVFLSCLQLCTLH, AALYGELCALLFAKSHYDEAYKWCIEAMKEITAG, SDTLLDYGFYLLNVDNICQSVAIYQAALDIRQSV, HEDLAYSSYVHQYSSGKFDNALFHAERAIGIITHI, AKHYGNLGRLYQSMRKFKEAEEMHIKAIQIKEQL, ALSVGHLASLYNYDMNQYENAEKLYLRSIAIGKKL, and EYDYRGLIKLYNSIGNYEKVFEYHNVLSNWNRLR.

As to quaternary structure, component of a CRL2 E3 ubiquitin-protein ligase complex, also named ECS (Elongin BC-CUL2/5-SOCS-box protein) complex, composed of CUL2, Elongin BC (ELOB and ELOC), RBX1 and substrate-specific adapter APPBP2. Interacts with APP; APP interaction inhibits the E3 ubiquitin-protein ligase activity of the CRL2(APPBP2) complex. Rapidly degraded by the proteasome upon overexpression of a C-terminal fragment of APP.

The protein resides in the nucleus. Its subcellular location is the cytoplasm. The protein localises to the cytoskeleton. It is found in the membrane. Its pathway is protein modification; protein ubiquitination. Its activity is regulated as follows. E3 ubiquitin-protein ligase activity of the CRL2(APPBP2) complex is inhibited by APP. Its function is as follows. Substrate-recognition component of a Cul2-RING (CRL2) E3 ubiquitin-protein ligase complex of the DesCEND (destruction via C-end degrons) pathway, which recognizes a C-degron located at the extreme C terminus of target proteins, leading to their ubiquitination and degradation. The C-degron recognized by the DesCEND pathway is usually a motif of less than ten residues and can be present in full-length proteins, truncated proteins or proteolytically cleaved forms. The CRL2(APPBP2) complex specifically recognizes proteins with a -Arg-Xaa-Xaa-Gly degron at the C-terminus, leading to their ubiquitination and degradation. The CRL2(APPBP2) complex mediates ubiquitination and degradation of truncated SELENOV selenoproteins produced by failed UGA/Sec decoding, which end with a -Arg-Xaa-Xaa-Gly degron. May play a role in intracellular protein transport: may be involved in the translocation of APP along microtubules toward the cell surface. This Homo sapiens (Human) protein is Amyloid protein-binding protein 2.